We begin with the raw amino-acid sequence, 126 residues long: Small ribosomal subunit protein uS13c (126 aa).

A disordered region spans residues 100 to 126 (GQRTRTNARTRRGARQTVAGKKKAPSK). Positions 101–126 (QRTRTNARTRRGARQTVAGKKKAPSK) are enriched in basic residues.

Belongs to the universal ribosomal protein uS13 family. In terms of assembly, part of the 30S ribosomal subunit.

The protein resides in the plastid. Its subcellular location is the cyanelle. Located at the top of the head of the 30S subunit, it contacts several helices of the 16S rRNA. This is Small ribosomal subunit protein uS13c from Cyanophora paradoxa.